A 346-amino-acid polypeptide reads, in one-letter code: Elongation factor Ts (346 aa).

The involved in Mg(2+) ion dislocation from EF-Tu stretch occupies residues 80 to 83 (TDFV).

The protein belongs to the EF-Ts family.

The protein resides in the cytoplasm. Its function is as follows. Associates with the EF-Tu.GDP complex and induces the exchange of GDP to GTP. It remains bound to the aminoacyl-tRNA.EF-Tu.GTP complex up to the GTP hydrolysis stage on the ribosome. The chain is Elongation factor Ts from Streptococcus uberis (strain ATCC BAA-854 / 0140J).